The following is a 306-amino-acid chain: Oxygen-dependent coproporphyrinogen-III oxidase (306 aa).

Ser94 contacts substrate. 2 residues coordinate a divalent metal cation: His98 and His108. His108 acts as the Proton donor in catalysis. Substrate is bound at residue 110-112; it reads NVR. Residues His147 and His177 each coordinate a divalent metal cation. Positions 242-277 are important for dimerization; it reads YVEFNLVYDRGTLFGLQTGGRTESILMSMPPLVRWE. 260-262 provides a ligand contact to substrate; that stretch reads GGR.

The protein belongs to the aerobic coproporphyrinogen-III oxidase family. As to quaternary structure, homodimer. A divalent metal cation is required as a cofactor.

It is found in the cytoplasm. The catalysed reaction is coproporphyrinogen III + O2 + 2 H(+) = protoporphyrinogen IX + 2 CO2 + 2 H2O. Its pathway is porphyrin-containing compound metabolism; protoporphyrin-IX biosynthesis; protoporphyrinogen-IX from coproporphyrinogen-III (O2 route): step 1/1. Functionally, involved in the heme biosynthesis. Catalyzes the aerobic oxidative decarboxylation of propionate groups of rings A and B of coproporphyrinogen-III to yield the vinyl groups in protoporphyrinogen-IX. The protein is Oxygen-dependent coproporphyrinogen-III oxidase of Shewanella woodyi (strain ATCC 51908 / MS32).